The sequence spans 244 residues: Type III pantothenate kinase (244 aa).

7–14 (DIGNTRLK) contributes to the ATP binding site. Substrate contacts are provided by residues Tyr-95 and 102 to 105 (GIDR). The active-site Proton acceptor is Asp-104. Residue Thr-126 coordinates ATP. Position 177 (Thr-177) interacts with substrate.

The protein belongs to the type III pantothenate kinase family. In terms of assembly, homodimer. NH4(+) serves as cofactor. It depends on K(+) as a cofactor.

It localises to the cytoplasm. The catalysed reaction is (R)-pantothenate + ATP = (R)-4'-phosphopantothenate + ADP + H(+). It participates in cofactor biosynthesis; coenzyme A biosynthesis; CoA from (R)-pantothenate: step 1/5. Catalyzes the phosphorylation of pantothenate (Pan), the first step in CoA biosynthesis. This chain is Type III pantothenate kinase, found in Acinetobacter baumannii (strain AB307-0294).